Reading from the N-terminus, the 334-residue chain is Holliday junction branch migration complex subunit RuvB (334 aa).

A large ATPase domain (RuvB-L) region spans residues 4 to 184 (ADRLIQPQLQ…FGIPLRLEFY (181 aa)). Residues Arg-24, Gly-65, Lys-68, Thr-69, Thr-70, 131 to 133 (EDY), Arg-174, Tyr-184, and Arg-221 each bind ATP. Position 69 (Thr-69) interacts with Mg(2+). A small ATPAse domain (RuvB-S) region spans residues 185–255 (NIKDLSTIVT…VADHALDLLD (71 aa)). The tract at residues 258-334 (NEGFDYMDRK…YQHFQLIKPE (77 aa)) is head domain (RuvB-H). Positions 294, 313, and 318 each coordinate DNA.

The protein belongs to the RuvB family. As to quaternary structure, homohexamer. Forms an RuvA(8)-RuvB(12)-Holliday junction (HJ) complex. HJ DNA is sandwiched between 2 RuvA tetramers; dsDNA enters through RuvA and exits via RuvB. An RuvB hexamer assembles on each DNA strand where it exits the tetramer. Each RuvB hexamer is contacted by two RuvA subunits (via domain III) on 2 adjacent RuvB subunits; this complex drives branch migration. In the full resolvosome a probable DNA-RuvA(4)-RuvB(12)-RuvC(2) complex forms which resolves the HJ.

It localises to the cytoplasm. It catalyses the reaction ATP + H2O = ADP + phosphate + H(+). Its function is as follows. The RuvA-RuvB-RuvC complex processes Holliday junction (HJ) DNA during genetic recombination and DNA repair, while the RuvA-RuvB complex plays an important role in the rescue of blocked DNA replication forks via replication fork reversal (RFR). RuvA specifically binds to HJ cruciform DNA, conferring on it an open structure. The RuvB hexamer acts as an ATP-dependent pump, pulling dsDNA into and through the RuvAB complex. RuvB forms 2 homohexamers on either side of HJ DNA bound by 1 or 2 RuvA tetramers; 4 subunits per hexamer contact DNA at a time. Coordinated motions by a converter formed by DNA-disengaged RuvB subunits stimulates ATP hydrolysis and nucleotide exchange. Immobilization of the converter enables RuvB to convert the ATP-contained energy into a lever motion, pulling 2 nucleotides of DNA out of the RuvA tetramer per ATP hydrolyzed, thus driving DNA branch migration. The RuvB motors rotate together with the DNA substrate, which together with the progressing nucleotide cycle form the mechanistic basis for DNA recombination by continuous HJ branch migration. Branch migration allows RuvC to scan DNA until it finds its consensus sequence, where it cleaves and resolves cruciform DNA. This is Holliday junction branch migration complex subunit RuvB from Shewanella putrefaciens (strain CN-32 / ATCC BAA-453).